A 592-amino-acid chain; its full sequence is ATP-dependent RNA helicase DBP3 (592 aa).

The segment at 1–146 is disordered; it reads MGKRPIEDDA…AGSYTEHTEL (146 aa). Residues 19–31 show a composition bias toward basic residues; the sequence is KKSKKEKSGKSKK. A compositionally biased stretch (basic and acidic residues) spans 73-82; it reads EAKEASKAGK. Residues 97-108 show a composition bias toward basic residues; sequence AARKAARKAEKK. Residues 116-141 show a composition bias toward polar residues; it reads TASSAPTEASSVPAQTLSSSNAGSYT. Positions 179–206 match the Q motif motif; it reads VNFKYLPVTDESQRAPFAGFTAPTPIQA. The Helicase ATP-binding domain occupies 209-382; it reads WPFLLSGRDM…STFMVSPVRI (174 aa). 222–229 contacts ATP; the sequence is AETGSGKT. Positions 330–333 match the DEAD box motif; it reads DEAD. A Helicase C-terminal domain is found at 413-562; sequence RLLQLLKQYQ…EVPEELLKFG (150 aa).

The protein belongs to the DEAD box helicase family. DDX5/DBP2 subfamily.

Its subcellular location is the nucleus. It is found in the nucleolus. It carries out the reaction ATP + H2O = ADP + phosphate + H(+). ATP-dependent RNA helicase required for 60S ribosomal subunit synthesis. Involved in efficient pre-rRNA processing, predominantly at site A3, which is necessary for the normal formation of 25S and 5.8S rRNAs. In Phaeosphaeria nodorum (strain SN15 / ATCC MYA-4574 / FGSC 10173) (Glume blotch fungus), this protein is ATP-dependent RNA helicase DBP3 (DBP3).